Consider the following 811-residue polypeptide: N-terminal acetyltransferase B complex subunit arm1 (811 aa).

The protein belongs to the MDM20/NAA25 family. As to quaternary structure, component of the N-terminal acetyltransferase B (NatB) complex.

The protein localises to the cytoplasm. Non-catalytic subunit of the NatB N-terminal acetyltransferase, which catalyzes acetylation of the amino-terminal methionine residues of all proteins beginning with Met-Asp or Met-Glu and of some proteins beginning with Met-Asn or Met-Met. This Schizosaccharomyces pombe (strain 972 / ATCC 24843) (Fission yeast) protein is N-terminal acetyltransferase B complex subunit arm1 (arm1).